Here is a 143-residue protein sequence, read N- to C-terminus: Large ribosomal subunit protein uL15 (143 aa).

Residues Met-1 to Gly-52 are disordered. Residues Arg-21–Ser-31 show a composition bias toward gly residues.

This sequence belongs to the universal ribosomal protein uL15 family. As to quaternary structure, part of the 50S ribosomal subunit.

Functionally, binds to the 23S rRNA. In Francisella tularensis subsp. tularensis (strain FSC 198), this protein is Large ribosomal subunit protein uL15.